We begin with the raw amino-acid sequence, 144 residues long: Eukaryotic translation initiation factor 1A, Y-chromosomal (144 aa).

The segment covering 1–15 (MPKNKGKGGKNRRRG) has biased composition (basic residues). Residues 1–26 (MPKNKGKGGKNRRRGKNENESEKREL) form a disordered region. Positions 16–26 (KNENESEKREL) are enriched in basic and acidic residues. Positions 22–96 (EKRELVFKED…NKADVILKYN (75 aa)) constitute an S1-like domain. Lys88 is covalently cross-linked (Glycyl lysine isopeptide (Lys-Gly) (interchain with G-Cter in ubiquitin)). The disordered stretch occupies residues 114-144 (KINETDTFGPGDDDEVQFDDIGDDDEDIDDI). Over residues 124–144 (GDDDEVQFDDIGDDDEDIDDI) the composition is skewed to acidic residues.

Belongs to the eIF-1A family. As to quaternary structure, component of the 43S pre-initiation complex (43S PIC), which is composed of the 40S ribosomal subunit, EIF1, eIF1A (EIF1AX), eIF3 complex, EIF5 and eIF2-GTP-initiator tRNA complex (eIF2 ternary complex). Interacts with EIF5; this interaction contributes to the maintenance of EIF1 within the open 43S PIC. Interacts through its C-terminal domain (CTD) with the CTD of EIF5B; from the location of the start codon by the 43S complex until the formation of the 80S complex. In terms of tissue distribution, ubiquitous.

It is found in the cytoplasm. Component of the 43S pre-initiation complex (43S PIC), which binds to the mRNA cap-proximal region, scans mRNA 5'-untranslated region, and locates the initiation codon. This protein enhances formation of the cap-proximal complex. Together with EIF1, facilitates scanning, start codon recognition, promotion of the assembly of 48S complex at the initiation codon (43S PIC becomes 48S PIC after the start codon is reached), and dissociation of aberrant complexes. After start codon location, together with EIF5B orients the initiator methionine-tRNA in a conformation that allows 60S ribosomal subunit joining to form the 80S initiation complex. Is released after 80S initiation complex formation, just after GTP hydrolysis by EIF5B, and before release of EIF5B. Its globular part is located in the A site of the 40S ribosomal subunit. Its interaction with EIF5 during scanning contribute to the maintenance of EIF1 within the open 43S PIC. In contrast to yeast orthologs, does not bind EIF1. The polypeptide is Eukaryotic translation initiation factor 1A, Y-chromosomal (EIF1AY) (Pan troglodytes (Chimpanzee)).